The chain runs to 155 residues: Troponin C, isoform 2 (155 aa).

4 consecutive EF-hand domains span residues 11-46 (EQIAVLQKAFNSFDHQKTGSIPTEMVADILRLMGQP), 47-82 (FDRQILDELIDEVDEDKSGRLEFEEFVQLAAKFIVE), 87-122 (AMQKELREAFRLYDKQGNGYIPTSCLKEILKELDDQ), and 123-155 (LTEQELDIMIEEIDSDGSGTVDFDEFMEMMTGE). Positions 60, 62, 64, 66, and 71 each coordinate Ca(2+). Residues Asp136, Asp138, Ser140, Thr142, and Glu147 each contribute to the Ca(2+) site.

Belongs to the troponin C family. Accumulates almost exclusively in larval muscles.

The sequence is that of Troponin C, isoform 2 (TpnC47D) from Drosophila melanogaster (Fruit fly).